Reading from the N-terminus, the 965-residue chain is Kinesin-like protein KIN-7K, chloroplastic (965 aa).

A disordered region spans residues 1-69; it reads MASRQGSKSR…PQTAQRSKEN (69 aa). Positions 19–28 are enriched in low complexity; the sequence is STASSTTSSS. The span at 29–38 shows a compositional bias: polar residues; the sequence is KLYQETSIDG. The span at 40–56 shows a compositional bias: low complexity; the sequence is SSPASSSAQSKQQFFSP. Residues 69–388 form the Kinesin motor domain; that stretch reads NVTVTVRFRP…LKFAHRAKHI (320 aa). 149–156 is a binding site for ATP; the sequence is GVTSSGKT. Positions 389–483 form a coiled coil; it reads EIQAEQNKII…LTKLILVSTK (95 aa). The span at 551–561 shows a compositional bias: basic residues; the sequence is LLNWLKPKKRD. Disordered regions lie at residues 551–633 and 842–888; these read LLNW…KMSD and ATQK…ELRM. The span at 564–577 shows a compositional bias: low complexity; that stretch reads SSASDQSSVVKSNS. The span at 606–623 shows a compositional bias: basic and acidic residues; sequence SEPREDREALEDSSHEME. Coiled coils occupy residues 628–703 and 738–846; these read SNKM…FVMT and NRII…TQKS. The segment covering 851-862 has biased composition (low complexity); sequence RNKTGTTTNVRN. The span at 864–888 shows a compositional bias: basic and acidic residues; sequence GRRESLAKRQEHDSPSMELKRELRM. The stretch at 896–931 forms a coiled coil; it reads YEAALGEKEQREAELERILEETKQREAYLENELANM. A disordered region spans residues 942 to 965; it reads QGADSEISDSISETRQTEQTEGSF. Residues 949-965 are compositionally biased toward polar residues; it reads SDSISETRQTEQTEGSF.

This sequence belongs to the TRAFAC class myosin-kinesin ATPase superfamily. Kinesin family. KIN-7 subfamily.

The protein localises to the plastid. Its subcellular location is the chloroplast. The polypeptide is Kinesin-like protein KIN-7K, chloroplastic (Arabidopsis thaliana (Mouse-ear cress)).